The following is a 165-amino-acid chain: Large ribosomal subunit protein uL10 (165 aa).

The protein belongs to the universal ribosomal protein uL10 family. As to quaternary structure, part of the ribosomal stalk of the 50S ribosomal subunit. The N-terminus interacts with L11 and the large rRNA to form the base of the stalk. The C-terminus forms an elongated spine to which L12 dimers bind in a sequential fashion forming a multimeric L10(L12)X complex.

Forms part of the ribosomal stalk, playing a central role in the interaction of the ribosome with GTP-bound translation factors. This is Large ribosomal subunit protein uL10 from Deinococcus deserti (strain DSM 17065 / CIP 109153 / LMG 22923 / VCD115).